The primary structure comprises 424 residues: Dihydroorotase (424 aa).

His58 and His60 together coordinate Zn(2+). Substrate contacts are provided by residues 60–62 (HLR) and Asn92. Residues Asp150, His177, and His230 each contribute to the Zn(2+) site. Residue Asn276 participates in substrate binding. Asp303 serves as a coordination point for Zn(2+). Residue Asp303 is part of the active site. Substrate contacts are provided by residues His307 and 321–322 (FG).

It belongs to the metallo-dependent hydrolases superfamily. DHOase family. Class I DHOase subfamily. The cofactor is Zn(2+).

The catalysed reaction is (S)-dihydroorotate + H2O = N-carbamoyl-L-aspartate + H(+). The protein operates within pyrimidine metabolism; UMP biosynthesis via de novo pathway; (S)-dihydroorotate from bicarbonate: step 3/3. Its function is as follows. Catalyzes the reversible cyclization of carbamoyl aspartate to dihydroorotate. The polypeptide is Dihydroorotase (Staphylococcus aureus (strain MRSA252)).